Reading from the N-terminus, the 117-residue chain is UPF0102 protein FTW_1281 (117 aa).

The protein belongs to the UPF0102 family.

The protein is UPF0102 protein FTW_1281 of Francisella tularensis subsp. tularensis (strain WY96-3418).